The primary structure comprises 180 residues: Bifunctional protein PyrR (180 aa).

A PRPP-binding motif is present at residues 101–113; that stretch reads VILVDDVLYTGRT.

It belongs to the purine/pyrimidine phosphoribosyltransferase family. PyrR subfamily. As to quaternary structure, homodimer and homohexamer; in equilibrium.

The catalysed reaction is UMP + diphosphate = 5-phospho-alpha-D-ribose 1-diphosphate + uracil. Regulates transcriptional attenuation of the pyrimidine nucleotide (pyr) operon by binding in a uridine-dependent manner to specific sites on pyr mRNA. This disrupts an antiterminator hairpin in the RNA and favors formation of a downstream transcription terminator, leading to a reduced expression of downstream genes. Functionally, also displays a weak uracil phosphoribosyltransferase activity which is not physiologically significant. In Bacillus cytotoxicus (strain DSM 22905 / CIP 110041 / 391-98 / NVH 391-98), this protein is Bifunctional protein PyrR.